The following is a 503-amino-acid chain: Transmembrane protein 184C (503 aa).

Helical transmembrane passes span 17–37, 48–68, 83–103, 115–135, 212–232, 254–274, and 287–307; these read LLIL…IWEF, VWFI…CGIL, IIRI…ALKY, ECYE…YLTI, YLVI…LLFY, VVFV…VGVI, and AVAT…AAIA. Disordered regions lie at residues 358–391 and 479–503; these read PKKK…SPVG and SPKP…STDS. The segment covering 373-388 has biased composition (low complexity); the sequence is SSLLSASSQDSSKPSS. Over residues 494 to 503 the composition is skewed to polar residues; that stretch reads PEGSDSSTDS.

It belongs to the TMEM184 family.

The protein localises to the membrane. Possible tumor suppressor which may play a role in cell growth. This is Transmembrane protein 184C (Tmem184c) from Rattus norvegicus (Rat).